Here is a 408-residue protein sequence, read N- to C-terminus: S-adenosylmethionine synthase (408 aa).

ATP is bound at residue Gly-142–Asp-147.

The protein belongs to the AdoMet synthase 2 family. It depends on Mg(2+) as a cofactor.

It carries out the reaction L-methionine + ATP + H2O = S-adenosyl-L-methionine + phosphate + diphosphate. It functions in the pathway amino-acid biosynthesis; S-adenosyl-L-methionine biosynthesis; S-adenosyl-L-methionine from L-methionine: step 1/1. Its function is as follows. Catalyzes the formation of S-adenosylmethionine from methionine and ATP. The sequence is that of S-adenosylmethionine synthase from Halobacterium salinarum (strain ATCC 29341 / DSM 671 / R1).